Here is a 65-residue protein sequence, read N- to C-terminus: Large ribosomal subunit protein bL35 (65 aa).

The protein belongs to the bacterial ribosomal protein bL35 family.

This is Large ribosomal subunit protein bL35 from Karelsulcia muelleri (strain GWSS) (Sulcia muelleri).